Here is a 1038-residue protein sequence, read N- to C-terminus: Translation initiation factor IF-2 (1038 aa).

Positions aspartate 48 to methionine 426 are disordered. The span at glycine 58–alanine 87 shows a compositional bias: low complexity. A compositionally biased stretch (pro residues) spans alanine 88–alanine 99. Residues glutamate 100 to alanine 114 are compositionally biased toward low complexity. Residues glycine 115 to lysine 125 show a composition bias toward pro residues. A compositionally biased stretch (low complexity) spans alanine 126–alanine 141. Residues proline 142–proline 153 are compositionally biased toward pro residues. Basic and acidic residues predominate over residues aspartate 177–alanine 199. The segment covering arginine 200–proline 219 has biased composition (low complexity). A compositionally biased stretch (gly residues) spans serine 261–glycine 277. Residues glycine 299 to proline 315 show a composition bias toward low complexity. Over residues proline 319 to glycine 406 the composition is skewed to gly residues. Over residues arginine 410–arginine 419 the composition is skewed to basic residues. In terms of domain architecture, tr-type G spans serine 531–aspartate 703. The segment at glycine 540–threonine 547 is G1. Glycine 540–threonine 547 is a GTP binding site. Residues glycine 565–histidine 569 form a G2 region. The segment at aspartate 590–glycine 593 is G3. GTP-binding positions include aspartate 590–histidine 594 and asparagine 644–aspartate 647. The segment at asparagine 644–aspartate 647 is G4. A G5 region spans residues serine 680–lysine 682.

The protein belongs to the TRAFAC class translation factor GTPase superfamily. Classic translation factor GTPase family. IF-2 subfamily.

It localises to the cytoplasm. Its function is as follows. One of the essential components for the initiation of protein synthesis. Protects formylmethionyl-tRNA from spontaneous hydrolysis and promotes its binding to the 30S ribosomal subunits. Also involved in the hydrolysis of GTP during the formation of the 70S ribosomal complex. This chain is Translation initiation factor IF-2, found in Streptomyces griseus subsp. griseus (strain JCM 4626 / CBS 651.72 / NBRC 13350 / KCC S-0626 / ISP 5235).